A 1595-amino-acid polypeptide reads, in one-letter code: A disintegrin and metalloproteinase with thrombospondin motifs 7 (1595 aa).

Positions 1-20 are cleaved as a signal peptide; it reads MHRGLNLLLILCALAPHVLG. Residues 21–217 constitute a propeptide that is removed on maturation; sequence PASGLPTEGR…QRQQKRRQQR (197 aa). Asn-84 and Asn-105 each carry an N-linked (GlcNAc...) asparagine glycan. Positions 165–218 are disordered; the sequence is PGHAQPHMVYKHKRSGQQDDSRTSGTCGVQGSPELKHQREHWEQRQQKRRQQRS. Positions 189–196 match the Cysteine switch motif; the sequence is GTCGVQGS. Position 191 (Cys-191) interacts with Zn(2+). Basic and acidic residues predominate over residues 198-210; sequence ELKHQREHWEQRQ. Residues 223 to 434 enclose the Peptidase M12B domain; that stretch reads KWVETLVVAD…GWGLCLDDRP (212 aa). 11 disulfide bridges follow: Cys-299-Cys-353, Cys-328-Cys-335, Cys-347-Cys-429, Cys-386-Cys-413, Cys-456-Cys-479, Cys-467-Cys-485, Cys-474-Cys-504, Cys-498-Cys-509, Cys-532-Cys-569, Cys-536-Cys-574, and Cys-547-Cys-559. Residue His-369 coordinates Zn(2+). Glu-370 is a catalytic residue. Positions 373 and 379 each coordinate Zn(2+). A Disintegrin domain is found at 444 to 519; that stretch reads VLPGVLYDVN…VPEGFQPETV (76 aa). A TSP type-1 1 domain is found at 520–575; the sequence is DGGWSGWSAWSVCSRSCGVGVRSSERQCTQPVPKNKGKYCVGERKRYRLCNLQACP. N-linked (GlcNAc...) asparagine glycosylation is present at Asn-619. A spacer region spans residues 680–791; that stretch reads HTVSRTFKEA…PGVHYKYTIQ (112 aa). 3 TSP type-1 domains span residues 801–860, 861–917, and 922–975; these read PEFS…EPCP, ARWW…IPCY, and CPSS…QPCQ. 4 disordered regions span residues 989–1035, 1077–1121, 1179–1234, and 1255–1315; these read GSSS…LDPP, PPHI…SHSP, REDT…LSPD, and KPVH…APTD. Pro residues-rich tracts occupy residues 1005–1015 and 1079–1089; these read QPVPRPSPASS and HIRPTEPPSDS. Residues 1220 to 1232 show a composition bias toward low complexity; it reads SSPSNSTTQASLS. The segment covering 1268–1280 has biased composition (polar residues); sequence QIQTPHTEGTQSP. 4 consecutive TSP type-1 domains span residues 1320 to 1368, 1371 to 1431, 1433 to 1476, and 1478 to 1538; these read KNAS…RHCH, PCAA…QPCL, WYTS…PCNT, and PCTQ…EDCE. The PLAC domain maps to 1541 to 1581; that stretch reads EPSRCERDRLPFNFCETLRLLGRCQLPTIRAQCCRSCPPLS.

In terms of assembly, interacts with COMP. Requires Zn(2+) as cofactor. Glycosylated. Can be O-fucosylated by POFUT2 on a serine or a threonine residue found within the consensus sequence C1-X(2)-(S/T)-C2-G of the TSP type-1 repeat domains where C1 and C2 are the first and second cysteine residue of the repeat, respectively. Fucosylated repeats can then be further glycosylated by the addition of a beta-1,3-glucose residue by the glucosyltransferase, B3GALTL. Fucosylation mediates the efficient secretion of ADAMTS family members. Can also be C-glycosylated with one or two mannose molecules on tryptophan residues within the consensus sequence W-X-X-W of the TPRs. N- and C-glycosylations can also facilitate secretion. In terms of processing, O-glycosylated proteoglycan; contains chondroitin sulfate. Post-translationally, may be cleaved by a furin endopeptidase. The precursor is sequentially processed. In terms of tissue distribution, detected in liver, ovary, kidney, testicle, lung and embryo.

It is found in the secreted. The protein resides in the extracellular space. The protein localises to the extracellular matrix. Metalloprotease. Was previously shown to degrade COMP. However, a later study found no activity against COMP. The protein is A disintegrin and metalloproteinase with thrombospondin motifs 7 (Adamts7) of Rattus norvegicus (Rat).